Here is a 91-residue protein sequence, read N- to C-terminus: Virion membrane protein A14 homolog (91 aa).

Residues 1–12 lie on the Intravirion side of the membrane; sequence MDPLGFFRNRPS. Residues 13-33 traverse the membrane as a helical segment; it reads YVVVFGIILLIVACICAYIEL. Residues 34-46 lie on the Virion surface side of the membrane; the sequence is SKSGKPADSALRS. A helical transmembrane segment spans residues 47-67; sequence ISIISFILAILLLLGIILFSG. Topologically, residues 68–91 are intravirion; sequence YNRYCTGNVVDESRYATSPGTEIQ.

This sequence belongs to the chordopoxvirinae A14 family. In terms of assembly, homodimer; disulfide-linked. Interacts with A17. In terms of processing, phosphorylated by viral F10 kinase, phosphorylation state is regulated by H1 phosphatase.

The protein localises to the virion membrane. Its function is as follows. Envelope protein which is a major component of the mature virion (MV) membrane. Essential for membrane biogenesis. Is required, together with A17, to form bona fide crescents, which can progress to form the immature virion (IV) membrane. A14 and A17 form a lattice that is stabilized by disulfide bonds and serves as an anchor within the viral membrane to which several other proteins important in virion structure and morphogenesis attach. The chain is Virion membrane protein A14 homolog from Fowlpox virus (strain NVSL) (FPV).